Here is a 511-residue protein sequence, read N- to C-terminus: GMP synthase [glutamine-hydrolyzing] (511 aa).

In terms of domain architecture, Glutamine amidotransferase type-1 spans 5 to 195 (DIIVLDFGSQ…AKYICDCEST (191 aa)). Catalysis depends on cysteine 82, which acts as the Nucleophile. Catalysis depends on residues histidine 169 and glutamate 171. The GMPS ATP-PPase domain maps to 196 to 386 (WNMGNFAKIK…LGLSPDLVYR (191 aa)). 223-229 (SGGVDSS) is a binding site for ATP.

Homodimer.

It carries out the reaction XMP + L-glutamine + ATP + H2O = GMP + L-glutamate + AMP + diphosphate + 2 H(+). The protein operates within purine metabolism; GMP biosynthesis; GMP from XMP (L-Gln route): step 1/1. Functionally, catalyzes the synthesis of GMP from XMP. This chain is GMP synthase [glutamine-hydrolyzing], found in Campylobacter hominis (strain ATCC BAA-381 / DSM 21671 / CCUG 45161 / LMG 19568 / NCTC 13146 / CH001A).